The following is a 376-amino-acid chain: Dual-specificity RNA methyltransferase RlmN (376 aa).

The active-site Proton acceptor is Glu-95. A Radical SAM core domain is found at 101–339 (EKERATLCVS…CIVRRPRGDD (239 aa)). Cys-108 and Cys-344 are disulfide-bonded. Positions 115, 119, and 122 each coordinate [4Fe-4S] cluster. Residues 169–170 (GE), Ser-201, 223–225 (SLH), and Asn-301 each bind S-adenosyl-L-methionine. Residue Cys-344 is the S-methylcysteine intermediate of the active site.

The protein belongs to the radical SAM superfamily. RlmN family. The cofactor is [4Fe-4S] cluster.

The protein localises to the cytoplasm. It carries out the reaction adenosine(2503) in 23S rRNA + 2 reduced [2Fe-2S]-[ferredoxin] + 2 S-adenosyl-L-methionine = 2-methyladenosine(2503) in 23S rRNA + 5'-deoxyadenosine + L-methionine + 2 oxidized [2Fe-2S]-[ferredoxin] + S-adenosyl-L-homocysteine. It catalyses the reaction adenosine(37) in tRNA + 2 reduced [2Fe-2S]-[ferredoxin] + 2 S-adenosyl-L-methionine = 2-methyladenosine(37) in tRNA + 5'-deoxyadenosine + L-methionine + 2 oxidized [2Fe-2S]-[ferredoxin] + S-adenosyl-L-homocysteine. Its function is as follows. Specifically methylates position 2 of adenine 2503 in 23S rRNA and position 2 of adenine 37 in tRNAs. m2A2503 modification seems to play a crucial role in the proofreading step occurring at the peptidyl transferase center and thus would serve to optimize ribosomal fidelity. In Pseudoalteromonas translucida (strain TAC 125), this protein is Dual-specificity RNA methyltransferase RlmN.